Here is a 138-residue protein sequence, read N- to C-terminus: 1,4-dihydroxy-2-naphthoyl-CoA hydrolase (138 aa).

Asp14 is an active-site residue.

Belongs to the 4-hydroxybenzoyl-CoA thioesterase family. DHNA-CoA hydrolase subfamily.

The catalysed reaction is 1,4-dihydroxy-2-naphthoyl-CoA + H2O = 1,4-dihydroxy-2-naphthoate + CoA + H(+). It functions in the pathway cofactor biosynthesis; phylloquinone biosynthesis. The protein operates within quinol/quinone metabolism; 1,4-dihydroxy-2-naphthoate biosynthesis; 1,4-dihydroxy-2-naphthoate from chorismate: step 7/7. Catalyzes the hydrolysis of 1,4-dihydroxy-2-naphthoyl-CoA (DHNA-CoA) to 1,4-dihydroxy-2-naphthoate (DHNA), a reaction involved in phylloquinone (vitamin K1) biosynthesis. This chain is 1,4-dihydroxy-2-naphthoyl-CoA hydrolase, found in Rippkaea orientalis (strain PCC 8801 / RF-1) (Cyanothece sp. (strain PCC 8801)).